A 145-amino-acid polypeptide reads, in one-letter code: MNIQDVKNYLPHRYPFLLIDRVLELEVGKSIVALKNVTFNEPQFIGHFPDQPIMPGVMIVEALAQATGILAFKAEVSKPTNGQIYMLVGIDKVRFKRMVEPGDQLRLEVGIVTVKRGIWKFKCKATVDSQTITSAELMCTQKATD.

Residue H47 is part of the active site.

The protein belongs to the thioester dehydratase family. FabZ subfamily.

The protein localises to the cytoplasm. It carries out the reaction a (3R)-hydroxyacyl-[ACP] = a (2E)-enoyl-[ACP] + H2O. Involved in unsaturated fatty acids biosynthesis. Catalyzes the dehydration of short chain beta-hydroxyacyl-ACPs and long chain saturated and unsaturated beta-hydroxyacyl-ACPs. This chain is 3-hydroxyacyl-[acyl-carrier-protein] dehydratase FabZ, found in Vesicomyosocius okutanii subsp. Calyptogena okutanii (strain HA).